The sequence spans 92 residues: MYGLINIGFGNVVAGDRVIAIVNPESSPLKRMKDEAKLEGKLIDATYGRKTRSIIITDSNHIILSAIQPETIAQRFMENFYEIERVLRETKK.

This sequence belongs to the RemA family.

This is Putative regulatory protein Tpet_0986 from Thermotoga petrophila (strain ATCC BAA-488 / DSM 13995 / JCM 10881 / RKU-1).